The chain runs to 431 residues: CCA tRNA nucleotidyltransferase 1, mitochondrial (431 aa).

A mitochondrion-targeting transit peptide spans Met1–Thr31. Residues Gly61 and Arg64 each contribute to the ATP site. 2 residues coordinate CTP: Gly61 and Arg64. Residues Asp74 and Asp76 each coordinate Mg(2+). Residues Arg148, Asp191, Arg194, Arg197, and Arg200 each coordinate ATP. CTP contacts are provided by Arg148, Asp191, Arg194, Arg197, and Arg200.

It belongs to the tRNA nucleotidyltransferase/poly(A) polymerase family. As to quaternary structure, monomer, and homodimer. Mg(2+) is required as a cofactor. Expressed ubiquitously during early embryogenesis.

It is found in the mitochondrion. The protein localises to the cytoplasm. The protein resides in the nucleus. The enzyme catalyses a tRNA precursor + 2 CTP + ATP = a tRNA with a 3' CCA end + 3 diphosphate. It carries out the reaction a tRNA with a 3' CCA end + 2 CTP + ATP = a tRNA with a 3' CCACCA end + 3 diphosphate. Functionally, nucleotidyltransferase that catalyzes the addition and repair of the essential 3'-terminal CCA sequence in tRNAs, which is necessary for the attachment of amino acids to the 3' terminus of tRNA molecules, using CTP and ATP as substrates. tRNA 3'-terminal CCA addition is required both for tRNA processing and repair. Promotes tRNA repair and recycling downstream of the ribosome-associated quality control (RQC) pathway by mediating addition of the tRNA 3'-terminal CCA following cleavage by ankzf1 and repair by elac1. Also involved in tRNA surveillance by mediating tandem CCA addition to generate a CCACCA at the 3' terminus of unstable tRNAs and tRNA-like transcripts. While stable tRNAs receive only 3'-terminal CCA, unstable tRNAs beginning with GG are marked with CCACCA and rapidly degraded. The structural flexibility of RNA controls the choice between CCA versus CCACCA addition: following the first CCA addition cycle, nucleotide-binding to the active site triggers a clockwise screw motion, producing torque on the RNA. This ejects stable RNAs, whereas unstable RNAs are refolded while bound to the enzyme and subjected to a second CCA catalytic cycle. The sequence is that of CCA tRNA nucleotidyltransferase 1, mitochondrial from Danio rerio (Zebrafish).